The following is a 231-amino-acid chain: Non-fluorescent flavoprotein (231 aa).

It belongs to the bacterial luciferase oxidoreductase family. Homodimer. The cofactor is FMN.

The protein is Non-fluorescent flavoprotein (luxF) of Photobacterium phosphoreum.